The chain runs to 192 residues: Shikimate kinase (192 aa).

27–32 is an ATP binding site; the sequence is GTGKTT. Threonine 31 contributes to the Mg(2+) binding site. Substrate is bound by residues aspartate 49, arginine 73, and glycine 95. An ATP-binding site is contributed by arginine 133. Position 152 (arginine 152) interacts with substrate.

The protein belongs to the shikimate kinase family. As to quaternary structure, monomer. It depends on Mg(2+) as a cofactor.

Its subcellular location is the cytoplasm. The enzyme catalyses shikimate + ATP = 3-phosphoshikimate + ADP + H(+). It participates in metabolic intermediate biosynthesis; chorismate biosynthesis; chorismate from D-erythrose 4-phosphate and phosphoenolpyruvate: step 5/7. Catalyzes the specific phosphorylation of the 3-hydroxyl group of shikimic acid using ATP as a cosubstrate. This Hahella chejuensis (strain KCTC 2396) protein is Shikimate kinase.